The following is a 277-amino-acid chain: Large ribosomal subunit protein uL2 (277 aa).

Positions 212-277 (RWRGKRPHVR…KFIVRGRKSK (66 aa)) are disordered. The span at 254 to 277 (TAGKKTRDKKKASTKFIVRGRKSK) shows a compositional bias: basic residues.

This sequence belongs to the universal ribosomal protein uL2 family. As to quaternary structure, part of the 50S ribosomal subunit. Forms a bridge to the 30S subunit in the 70S ribosome.

Its function is as follows. One of the primary rRNA binding proteins. Required for association of the 30S and 50S subunits to form the 70S ribosome, for tRNA binding and peptide bond formation. It has been suggested to have peptidyltransferase activity; this is somewhat controversial. Makes several contacts with the 16S rRNA in the 70S ribosome. This is Large ribosomal subunit protein uL2 from Leuconostoc citreum (strain KM20).